The following is a 141-amino-acid chain: Cystatin-SA (141 aa).

An N-terminal signal peptide occupies residues 1–20 (MAWPLCTLLLLLATQAVALA). Residues 76–80 (QIVGG) carry the Secondary area of contact motif. Intrachain disulfides connect C94/C104 and C118/C138.

In terms of tissue distribution, expressed in submandibular and sublingual saliva but not in parotid saliva (at protein level). Expressed in submandibular gland and parotid gland.

It localises to the secreted. Thiol protease inhibitor. This Homo sapiens (Human) protein is Cystatin-SA (CST2).